Consider the following 125-residue polypeptide: MKAIKIAMVGAALVWSASAYAAGDPVKGEQVFKQCKICHQVGPTAKPGVGPVQNNVVGSKAGSRPGFNYSDAMKNSGLTWDEATLDKYLENPKAVVPGTKMVFVGLKNPQDRADVIAFLATQHGQ.

A signal peptide spans 1-21 (MKAIKIAMVGAALVWSASAYA). In terms of domain architecture, Cytochrome c spans 23–123 (GDPVKGEQVF…DVIAFLATQH (101 aa)). Heme c is bound by residues C35, C38, H39, and M101.

The protein belongs to the cytochrome c family. In terms of processing, binds 1 heme c group covalently per subunit.

Functionally, cytochrome c2 is found mainly in purple, non-sulfur, photosynthetic bacteria where it functions as the electron donor to the oxidized bacteriochlorophyll in the photophosphorylation pathway. However, it may also have a role in the respiratory chain and is found in some non-photosynthetic bacteria. This is Cytochrome c2 from Rhodomicrobium vannielii (strain ATCC 17100 / DSM 162 / LMG 4299 / NCIMB 10020 / ATH 3.1.1).